Reading from the N-terminus, the 755-residue chain is Beta-galactosidase (755 aa).

The active-site Proton donor is the E382. The active-site Nucleophile is the E463.

It belongs to the glycosyl hydrolase 2 family.

The enzyme catalyses Hydrolysis of terminal non-reducing beta-D-galactose residues in beta-D-galactosides.. The protein is Beta-galactosidase (lacZ) of Rhizobium meliloti (Ensifer meliloti).